Here is a 160-residue protein sequence, read N- to C-terminus: Phosphopantetheine adenylyltransferase (160 aa).

Ser11 is a binding site for substrate. ATP-binding positions include 11–12 (SF) and His19. 3 residues coordinate substrate: Lys43, Leu75, and Arg89. Residues 90 to 92 (GLR), Glu100, and 125 to 131 (YSFISSS) each bind ATP.

Belongs to the bacterial CoaD family. Homohexamer. It depends on Mg(2+) as a cofactor.

Its subcellular location is the cytoplasm. It catalyses the reaction (R)-4'-phosphopantetheine + ATP + H(+) = 3'-dephospho-CoA + diphosphate. It participates in cofactor biosynthesis; coenzyme A biosynthesis; CoA from (R)-pantothenate: step 4/5. Functionally, reversibly transfers an adenylyl group from ATP to 4'-phosphopantetheine, yielding dephospho-CoA (dPCoA) and pyrophosphate. The chain is Phosphopantetheine adenylyltransferase from Staphylococcus aureus (strain Mu3 / ATCC 700698).